Reading from the N-terminus, the 465-residue chain is Clusterin-like protein 1 (465 aa).

An N-terminal signal peptide occupies residues Met1 to Cys20. Residues Leu62 to Val107 are a coiled coil. 5 disulfide bridges follow: Cys105/Cys333, Cys116/Cys325, Cys119/Cys322, Cys124/Cys315, and Cys131/Cys305. 2 N-linked (GlcNAc...) asparagine glycosylation sites follow: Asn196 and Asn257. Positions Leu280–Arg300 are disordered. 4 N-linked (GlcNAc...) asparagine glycosylation sites follow: Asn311, Asn351, Asn412, and Asn430.

The protein belongs to the clusterin family.

It is found in the secreted. The sequence is that of Clusterin-like protein 1 from Bos taurus (Bovine).